A 277-amino-acid chain; its full sequence is Multiple sugar-binding transport system permease protein MsmG (277 aa).

Transmembrane regions (helical) follow at residues 13-33 (YVLLTVGGILILIPLMVTVFS), 74-94 (VITVLSVLVVMLFIPAAAYSI), 110-130 (LLILGIFVPFQVIMIPITVMM), 141-161 (LIILYLTYAIPQTLFLYVGYI), 198-218 (TTLIINALWFWNDFMLPLLIL), and 243-263 (GPSFASYIVGIITITIVYLIF). An ABC transmembrane type-1 domain is found at 69 to 263 (FWNSTVITVL…ITITIVYLIF (195 aa)).

This sequence belongs to the binding-protein-dependent transport system permease family. MalFG subfamily.

It localises to the cell membrane. Functionally, involved in a binding protein-dependent transport system responsible for the uptake of melibiose, raffinose and isomaltotriose. This chain is Multiple sugar-binding transport system permease protein MsmG (msmG), found in Streptococcus mutans serotype c (strain ATCC 700610 / UA159).